Reading from the N-terminus, the 241-residue chain is MRKIIIAGNWKMYKTQAEALEFVQVFKSKIEDTDESREIVLCAPFTDLGAMSKNLHGSRIKLGAQNVHWEEAGAYTGEISGAMLTEIGVSYVIVGHSERRQYFGDTDETVNLRVLAAQKYGLIPILCVGESKSQRDAGETEKIIINQLKRDLVDVDQNKLVIAYEPIWAIGTGDTCESSEANRVIGIIREQLTNKNVSIQYGGSVKPGNIDEIMKQSEIDGALVGGASLNPADFAQIVNYK.

9–11 contributes to the substrate binding site; that stretch reads NWK. The active-site Electrophile is His96. The active-site Proton acceptor is Glu165. Substrate contacts are provided by residues Gly171, Ser204, and 225-226; that span reads GG.

Belongs to the triosephosphate isomerase family. Homodimer.

Its subcellular location is the cytoplasm. It catalyses the reaction D-glyceraldehyde 3-phosphate = dihydroxyacetone phosphate. It participates in carbohydrate biosynthesis; gluconeogenesis. It functions in the pathway carbohydrate degradation; glycolysis; D-glyceraldehyde 3-phosphate from glycerone phosphate: step 1/1. Involved in the gluconeogenesis. Catalyzes stereospecifically the conversion of dihydroxyacetone phosphate (DHAP) to D-glyceraldehyde-3-phosphate (G3P). This chain is Triosephosphate isomerase, found in Gloeothece citriformis (strain PCC 7424) (Cyanothece sp. (strain PCC 7424)).